The following is a 253-amino-acid chain: MLEAYIRERRRQKEILLMTHIVMGYPDFETSMAIVEQMVEAGVDLMELQIPFSEPMADGPVILGANQAALSGGARVERCFEFARQAAAKFDIPFLFMTYYNILFKYGVTPFVNKMADINIKGAIVPDLPPEEGQAYLKAMEEQNLSPIHIFSPRTSNERMDFLASQTRGFVYCVARKGVTGKETRFTEEIAGYLDRCRQATTLPLAVGFGVKDEADIAFLKGKADIAVVGSEMIRVVENQGVEGVGRFIQSLA.

Residues Glu47 and Asp58 each act as proton acceptor in the active site.

Belongs to the TrpA family. In terms of assembly, tetramer of two alpha and two beta chains.

The catalysed reaction is (1S,2R)-1-C-(indol-3-yl)glycerol 3-phosphate + L-serine = D-glyceraldehyde 3-phosphate + L-tryptophan + H2O. It participates in amino-acid biosynthesis; L-tryptophan biosynthesis; L-tryptophan from chorismate: step 5/5. Its function is as follows. The alpha subunit is responsible for the aldol cleavage of indoleglycerol phosphate to indole and glyceraldehyde 3-phosphate. This Desulforapulum autotrophicum (strain ATCC 43914 / DSM 3382 / VKM B-1955 / HRM2) (Desulfobacterium autotrophicum) protein is Tryptophan synthase alpha chain.